Reading from the N-terminus, the 668-residue chain is MAP kinase kinase PBS2 (668 aa).

Residues 1-15 show a composition bias toward basic and acidic residues; it reads MEDKFANLSLHEKTG. Disordered regions lie at residues 1 to 43, 61 to 120, and 181 to 313; these read MEDK…SSHY, RALK…ASSK, and NPNR…GSSG. Polar residues-rich tracts occupy residues 16 to 43, 68 to 91, and 104 to 120; these read KSSI…SSHY, SVGS…QQIV, and SKVS…ASSK. S68 bears the Phosphoserine mark. The span at 239–250 shows a compositional bias: low complexity; the sequence is AQQPQQFAPSPS. S269 bears the Phosphoserine mark. The segment covering 270–300 has biased composition (polar residues); sequence NPGSLINGVQSTSTSSSTEGPHDTVGTTPRT. Positions 301–310 are enriched in low complexity; sequence GNSNNSSNSG. One can recognise a Protein kinase domain in the interval 360-623; that stretch reads LEFLDELGHG…YAALTEHPWL (264 aa). ATP-binding positions include 366-374 and K389; that span reads LGHGNYGNV. Catalysis depends on D485, which acts as the Proton acceptor. At S514 the chain carries Phosphoserine. The residue at position 518 (T518) is a Phosphothreonine.

This sequence belongs to the protein kinase superfamily. STE Ser/Thr protein kinase family. MAP kinase kinase subfamily. In terms of assembly, interacts with NBP2, PTC1, SHO1 and STE11. Post-translationally, activated by phosphorylation by SSK2 or SSK22. Ser/Thr phosphorylation is also necessary for SHO1-mediated activation.

It is found in the cytoplasm. It carries out the reaction L-seryl-[protein] + ATP = O-phospho-L-seryl-[protein] + ADP + H(+). The enzyme catalyses L-threonyl-[protein] + ATP = O-phospho-L-threonyl-[protein] + ADP + H(+). The catalysed reaction is L-tyrosyl-[protein] + ATP = O-phospho-L-tyrosyl-[protein] + ADP + H(+). Its function is as follows. Kinase involved in a signal transduction pathway that is activated by changes in the osmolarity of the extracellular environment. Activates the MAP kinase HOG1 by concomitant phosphorylation at 'Thr-174' and 'Tyr-176'. The sequence is that of MAP kinase kinase PBS2 (PBS2) from Saccharomyces cerevisiae (strain ATCC 204508 / S288c) (Baker's yeast).